We begin with the raw amino-acid sequence, 353 residues long: Photosystem II D2 protein (353 aa).

An N-acetylthreonine modification is found at Thr-2. A Phosphothreonine modification is found at Thr-2. The chain crosses the membrane as a helical span at residues Cys-41–Thr-61. A chlorophyll a-binding site is contributed by His-118. Residues Gly-125 to Pro-141 form a helical membrane-spanning segment. Gln-130 and Asn-143 together coordinate pheophytin a. The helical transmembrane segment at Val-153–Ser-166 threads the bilayer. Residue His-198 coordinates chlorophyll a. Residues Ala-208 to Asp-228 traverse the membrane as a helical segment. Positions 215 and 262 each coordinate a plastoquinone. His-215 is a Fe cation binding site. His-269 lines the Fe cation pocket. Residues Gly-279 to Arg-295 form a helical membrane-spanning segment.

Belongs to the reaction center PufL/M/PsbA/D family. In terms of assembly, PSII is composed of 1 copy each of membrane proteins PsbA, PsbB, PsbC, PsbD, PsbE, PsbF, PsbH, PsbI, PsbJ, PsbK, PsbL, PsbM, PsbT, PsbX, PsbY, PsbZ, Psb30/Ycf12, at least 3 peripheral proteins of the oxygen-evolving complex and a large number of cofactors. It forms dimeric complexes. It depends on The D1/D2 heterodimer binds P680, chlorophylls that are the primary electron donor of PSII, and subsequent electron acceptors. It shares a non-heme iron and each subunit binds pheophytin, quinone, additional chlorophylls, carotenoids and lipids. There is also a Cl(-1) ion associated with D1 and D2, which is required for oxygen evolution. The PSII complex binds additional chlorophylls, carotenoids and specific lipids. as a cofactor.

It localises to the plastid. It is found in the chloroplast thylakoid membrane. It catalyses the reaction 2 a plastoquinone + 4 hnu + 2 H2O = 2 a plastoquinol + O2. Its function is as follows. Photosystem II (PSII) is a light-driven water:plastoquinone oxidoreductase that uses light energy to abstract electrons from H(2)O, generating O(2) and a proton gradient subsequently used for ATP formation. It consists of a core antenna complex that captures photons, and an electron transfer chain that converts photonic excitation into a charge separation. The D1/D2 (PsbA/PsbD) reaction center heterodimer binds P680, the primary electron donor of PSII as well as several subsequent electron acceptors. D2 is needed for assembly of a stable PSII complex. The protein is Photosystem II D2 protein of Nicotiana tabacum (Common tobacco).